A 385-amino-acid polypeptide reads, in one-letter code: Probable thioesterase PNKD (385 aa).

Residues 32-58 (KASHNRTRALQSHSSPEGKEEPEPLSP) form a disordered region. 7 residues coordinate Zn(2+): histidine 172, histidine 174, aspartate 176, histidine 177, histidine 229, aspartate 253, and histidine 291.

The protein belongs to the metallo-beta-lactamase superfamily. Glyoxalase II family. As to quaternary structure, isoform 2 interacts with the sarcomeric proteins, MRLC2, MYOM1 and ENO3. Zn(2+) is required as a cofactor. In terms of processing, undergoes cleavage at the N-terminus. Isoform 1 is only expressed in the brain. Isoform 2 is ubiquitously detected with highest expression in skeletal muscle and detected in myocardial myofibrils.

It is found in the cell membrane. The protein resides in the mitochondrion. The protein localises to the cytoplasm. It localises to the golgi apparatus. Its subcellular location is the endoplasmic reticulum. The enzyme catalyses a thioester + H2O = a thiol + a carboxylate + H(+). Functionally, probable thioesterase that may play a role in cellular detoxification processes; it likely acts on a yet-unknown alpha-hydroxythioester substrate. In vitro, it is able to catalyze the hydrolysis of S-D-lactoyl-glutathione to form glutathione and D-lactic acid at very low rate, though this reaction is not physiologically relevant in vivo. This chain is Probable thioesterase PNKD (PNKD), found in Homo sapiens (Human).